The chain runs to 149 residues: UPF0306 protein PM1958 (149 aa).

The protein belongs to the UPF0306 family.

This chain is UPF0306 protein PM1958, found in Pasteurella multocida (strain Pm70).